The chain runs to 48 residues: uncharacterized protein (48 aa).

This is an uncharacterized protein from Methanocaldococcus jannaschii (strain ATCC 43067 / DSM 2661 / JAL-1 / JCM 10045 / NBRC 100440) (Methanococcus jannaschii).